Here is a 488-residue protein sequence, read N- to C-terminus: Surface lipoprotein assembly modifier 1 (488 aa).

The signal sequence occupies residues 1–31 (MVIFYFCGKTFMPARNRWMLLLPLLASAAYA). The N-terminal domain stretch occupies residues 32–202 (EETPREPDLR…LYRKALRERD (171 aa)). 2 TPR repeats span residues 118-151 (MLALYAQGILAQADGRVKEAISHYRELIAAQPDA) and 171-204 (AADQFDRLKAENLPPQLMEQVELYRKALRERDAW). Residues 203 to 488 (AWKVNGGFSV…RAFVEFNKTF (286 aa)) form a C-terminal probable beta barrel, partially restores export of lipoproteins region. The next 14 beta stranded transmembrane spans lie at 204-214 (WKVNGGFSVTR), 241-252 (VNYRLGAEKKWS), 257-267 (WYTTAGGDVSG), 280-291 (TAGVSGGIGFAD), 294-304 (KDAGLAVFHER), 316-325 (NGARLYFNRW), 330-340 (WQTLSSAEWGR), 354-364 (LQISNSLVFYR), 368-377 (QYWMGGLDFY), 393-402 (GLRFAWGQEW), 407-417 (LSSLLRLGAAK), 439-448 (LNTSLSLWHR), 455-464 (ITPRLTLSHR), and 478-488 (NRAFVEFNKTF).

It belongs to the Slam family. As to quaternary structure, interacts with the C-terminal domain of surface lipoprotein TbpB.

Its subcellular location is the cell outer membrane. Required for correct export to the cell surface of some cell outer membrane lipoproteins both in Neisseria and heterologously in E.coli. The polypeptide is Surface lipoprotein assembly modifier 1 (Neisseria meningitidis serogroup B (strain ATCC BAA-335 / MC58)).